The following is a 119-amino-acid chain: Large ribosomal subunit protein uL18 (119 aa).

Belongs to the universal ribosomal protein uL18 family. In terms of assembly, part of the 50S ribosomal subunit; part of the 5S rRNA/L5/L18/L25 subcomplex. Contacts the 5S and 23S rRNAs.

Functionally, this is one of the proteins that bind and probably mediate the attachment of the 5S RNA into the large ribosomal subunit, where it forms part of the central protuberance. The chain is Large ribosomal subunit protein uL18 from Clostridium botulinum (strain ATCC 19397 / Type A).